Reading from the N-terminus, the 201-residue chain is Recombination protein RecR (201 aa).

The segment at 60-75 (CKRCGSYAETEICEIC) adopts a C4-type zinc-finger fold. The Toprim domain maps to 83 to 178 (HTFCVVEQPE…NVTRIAYGIT (96 aa)).

This sequence belongs to the RecR family.

Functionally, may play a role in DNA repair. It seems to be involved in an RecBC-independent recombinational process of DNA repair. It may act with RecF and RecO. The protein is Recombination protein RecR of Leptospira interrogans serogroup Icterohaemorrhagiae serovar copenhageni (strain Fiocruz L1-130).